The sequence spans 98 residues: MALTKAEMAEHLFETLGINKRVAKEMVETFFEEIRSALESGEQVKLSGFGNFDLRDKNQRPGRNPKTGEDIPISARRVVTFRPGQKLKSRVESSNSEK.

Positions Phe-49–Ile-71 are disordered.

It belongs to the bacterial histone-like protein family. In terms of assembly, heterodimer of an alpha and a beta chain.

Its function is as follows. This protein is one of the two subunits of integration host factor, a specific DNA-binding protein that functions in genetic recombination as well as in transcriptional and translational control. This is Integration host factor subunit alpha from Shewanella amazonensis (strain ATCC BAA-1098 / SB2B).